The chain runs to 139 residues: Large ribosomal subunit protein uL16 (139 aa).

The segment covering methionine 1 to methionine 20 has biased composition (basic residues). A disordered region spans residues methionine 1–lysine 22.

The protein belongs to the universal ribosomal protein uL16 family. In terms of assembly, part of the 50S ribosomal subunit.

Binds 23S rRNA and is also seen to make contacts with the A and possibly P site tRNAs. The chain is Large ribosomal subunit protein uL16 from Streptomyces coelicolor (strain ATCC BAA-471 / A3(2) / M145).